The primary structure comprises 325 residues: GMP reductase (325 aa).

Cys174 (thioimidate intermediate) is an active-site residue. Residue 203–226 (MIADGGIRTHGDIAKSIRFGASMV) participates in NADP(+) binding.

Belongs to the IMPDH/GMPR family. GuaC type 2 subfamily.

The catalysed reaction is IMP + NH4(+) + NADP(+) = GMP + NADPH + 2 H(+). Its function is as follows. Catalyzes the irreversible NADPH-dependent deamination of GMP to IMP. It functions in the conversion of nucleobase, nucleoside and nucleotide derivatives of G to A nucleotides, and in maintaining the intracellular balance of A and G nucleotides. This chain is GMP reductase, found in Staphylococcus carnosus (strain TM300).